An 87-amino-acid chain; its full sequence is UPF0335 protein RL4065 (87 aa).

The protein belongs to the UPF0335 family.

This Rhizobium johnstonii (strain DSM 114642 / LMG 32736 / 3841) (Rhizobium leguminosarum bv. viciae) protein is UPF0335 protein RL4065.